A 136-amino-acid chain; its full sequence is uncharacterized protein (136 aa).

Residues 1–35 form the signal peptide; that stretch reads MTHRAVPCQPRAFSKIKVLVISFLFLMVAFLPFSS.

This is an uncharacterized protein from Saccharomyces cerevisiae (strain ATCC 204508 / S288c) (Baker's yeast).